A 282-amino-acid chain; its full sequence is 4-hydroxy-tetrahydrodipicolinate reductase (282 aa).

Residues 14 to 19 (GAMGRM) and 115 to 117 (GTT) contribute to the NAD(+) site. The active-site Proton donor/acceptor is H171. H172 is a (S)-2,3,4,5-tetrahydrodipicolinate binding site. K175 serves as the catalytic Proton donor. 181–182 (GT) is a binding site for (S)-2,3,4,5-tetrahydrodipicolinate.

It belongs to the DapB family.

It is found in the cytoplasm. The enzyme catalyses (S)-2,3,4,5-tetrahydrodipicolinate + NAD(+) + H2O = (2S,4S)-4-hydroxy-2,3,4,5-tetrahydrodipicolinate + NADH + H(+). It catalyses the reaction (S)-2,3,4,5-tetrahydrodipicolinate + NADP(+) + H2O = (2S,4S)-4-hydroxy-2,3,4,5-tetrahydrodipicolinate + NADPH + H(+). It functions in the pathway amino-acid biosynthesis; L-lysine biosynthesis via DAP pathway; (S)-tetrahydrodipicolinate from L-aspartate: step 4/4. Catalyzes the conversion of 4-hydroxy-tetrahydrodipicolinate (HTPA) to tetrahydrodipicolinate. The protein is 4-hydroxy-tetrahydrodipicolinate reductase of Prochlorococcus marinus (strain NATL2A).